The sequence spans 2170 residues: Brefeldin A-inhibited guanine nucleotide-exchange protein 3 (2170 aa).

Serine 471 carries the phosphoserine modification. Disordered stretches follow at residues 489–547 and 613–634; these read EHTP…MGKV and AAEKDSGRSDVSDIGSDNCSLA. Residues 503-524 show a composition bias toward polar residues; that stretch reads ISISVTTDTGQTTLEGELGQTT. In terms of domain architecture, SEC7 spans 579-792; the sequence is RTRSYGSRYS…EELYHQVLDR (214 aa). The span at 614 to 623 shows a compositional bias: basic and acidic residues; that stretch reads AEKDSGRSDV. Residues serine 628, serine 632, and serine 1045 each carry the phosphoserine modification. Residues 1488–1508 traverse the membrane as a helical segment; sequence PGFGIYAVVHLLLPVMSLWLL. A disordered region spans residues 1843 to 1872; that stretch reads SSDSSQQCSSEDEDIFEETAQVSPPRGKEK. Serine 1881 is modified (phosphoserine). The span at 1938–1955 shows a compositional bias: polar residues; the sequence is FQSESSTPSTGGFSGKNT. 2 disordered regions span residues 1938-1997 and 2024-2058; these read FQSE…RKKE and KRRQPHNLPPFPKEVKVDKKGEPLGPRGPDSPLLQ. Positions 1956 to 1966 are enriched in basic and acidic residues; it reads PSEDDRREHLS. A phosphoserine mark is found at serine 1975 and serine 1984. 2 stretches are compositionally biased toward basic and acidic residues: residues 1986-1997 and 2036-2045; these read KTEKKDPGRKKE and KEVKVDKKGE. Phosphoserine occurs at positions 2072, 2074, 2088, 2094, and 2096. A disordered region spans residues 2078–2097; sequence ELLRQEKRPRSGSTGSSLSV. The segment covering 2088-2097 has biased composition (low complexity); the sequence is SGSTGSSLSV.

In terms of assembly, interacts with PHB2. As to expression, expressed in pancreatic islet (insulin granules of islet alpha and beta cells) and brain (at protein level).

It is found in the cytoplasmic vesicle. Its subcellular location is the secretory vesicle. The protein resides in the secretory vesicle membrane. Participates in the regulation of systemic glucose homeostasis, where it negatively regulates insulin granule biogenesis in pancreatic islet beta cells. Also regulates glucagon granule production in pancreatic alpha cells. Inhibits nuclear translocation of the transcriptional coregulator PHB2 and may enhance estrogen receptor alpha (ESR1) transcriptional activity in breast cancer cells. This is Brefeldin A-inhibited guanine nucleotide-exchange protein 3 from Mus musculus (Mouse).